We begin with the raw amino-acid sequence, 654 residues long: Heat shock 70 kDa protein 2 (654 aa).

Gly residues predominate over residues 612–646 (AGGEGGAPGAGFPGAGGPGGFPGAGAGGAHSGGDD). A disordered region spans residues 612-654 (AGGEGGAPGAGFPGAGGPGGFPGAGAGGAHSGGDDGPTVEEVD).

The protein belongs to the heat shock protein 70 family.

The protein is Heat shock 70 kDa protein 2 (HSP70-2) of Paracoccidioides lutzii (strain ATCC MYA-826 / Pb01) (Paracoccidioides brasiliensis).